We begin with the raw amino-acid sequence, 328 residues long: Testis-specific serine/threonine-protein kinase 4 (328 aa).

In terms of domain architecture, Protein kinase spans 25 to 293 (YEVGKAIGHG…ILDIIKDSWV (269 aa)). Residues 31-39 (IGHGSYGSV) and lysine 54 contribute to the ATP site. Aspartate 148 serves as the catalytic Proton acceptor. Position 197 is a phosphothreonine (threonine 197).

It belongs to the protein kinase superfamily. CAMK Ser/Thr protein kinase family. In terms of assembly, homodimer. Interacts with HSP90; this interaction stabilizes and activates TSSK4. Interacts with ODF2 (via C-terminus); this interaction promotes ODF2 phosphorylation on 'Ser-95'. May interact with CREM. Interacts with CREB1; this interaction facilitates phosphorylation on 'Ser-133'. Interacts with QRICH2. It depends on Mg(2+) as a cofactor. Activated by autophosphorylation on Thr-197. ODF2 potentiates the autophosphorylation activity of TSSK4 at Thr-197. Post-translationally, ubiquitinated; HSP90 activity negatively regulates ubiquitination and degradation. Expressed only in the testis.

The protein resides in the cytoplasmic vesicle. It is found in the secretory vesicle. The protein localises to the acrosome. Its subcellular location is the cell projection. It localises to the cilium. The protein resides in the flagellum. It catalyses the reaction L-seryl-[protein] + ATP = O-phospho-L-seryl-[protein] + ADP + H(+). The catalysed reaction is L-threonyl-[protein] + ATP = O-phospho-L-threonyl-[protein] + ADP + H(+). With respect to regulation, activated by phosphorylation on Thr-197. Functionally, serine/threonine kinase which is involved in male germ cell development and in mature sperm function. May be involved in the Cre/Creb signaling pathway. Phosphorylates CREB1 on 'Ser-133' in vitro and can stimulate Cre/Creb pathway in cells. Phosphorylates CREM on 'Ser-116' in vitro. Phosphorylates ODF2 on 'Ser-95'. The polypeptide is Testis-specific serine/threonine-protein kinase 4 (Homo sapiens (Human)).